Reading from the N-terminus, the 720-residue chain is Transcriptional regulator EFH1 (720 aa).

Composition is skewed to polar residues over residues 1-15 (MNGIMTTSSHSNFYN) and 22-35 (PSSSDHIPGPSSQD). Disordered regions lie at residues 1–111 (MNGI…SSST), 181–223 (SFQM…HQSQ), 245–336 (QKEF…TIAT), and 365–437 (YQRQ…PQPD). Over residues 71–105 (QQNQSESQQSRQSHHLQQQQQQQQQQQQNQHNQQN) the composition is skewed to low complexity. The segment covering 181–200 (SFQMGSVSTPDTQNSSIRSK) has biased composition (polar residues). Low complexity predominate over residues 201–223 (QQQQHSYQQQQPQQLSQSQHQSQ). Residues 254-266 (GDQTLVPQTNSKL) show a composition bias toward polar residues. Over residues 267–304 (QQQISETSYSQQQQQQQSPPTPQKQQQQQHYQHQTTQP) the composition is skewed to low complexity. Positions 313-336 (YSQTGGPSSSPVAGNISIPTTIAT) are enriched in polar residues. Low complexity predominate over residues 366–399 (QRQQQQQQQHQQPQSQQMSQISQLSQQIPPQGSS). A compositionally biased stretch (polar residues) spans 400 to 413 (KNISINSTPTKSRA). Positions 414 to 433 (SSITTRSGRQSRSTSISSFI) are enriched in low complexity. The region spanning 446–552 (KVATTRWDDE…KNIKQYFLTK (107 aa)) is the HTH APSES-type domain. A DNA-binding region (H-T-H motif) is located at residues 480 to 501 (GTKLLNVIGMTRGKRDGILKTE). Over residues 569-582 (GMTRQREEVRREGR) the composition is skewed to basic and acidic residues. The interval 569 to 662 (GMTRQREEVR…KNSESKLLET (94 aa)) is disordered. Residues 613–644 (VPGDDEEEEDDDDDDDDDEEEGEQDDEEEEDG) are compositionally biased toward acidic residues. Low complexity predominate over residues 645–654 (SSTSMSSSKN).

It belongs to the EFG1/PHD1/stuA family.

The protein localises to the nucleus. Functionally, transcription factor that regulates filamentous growth through repression of EFG1. Regulates the level of colonizing fungi, favoring commensalism as opposed to candidiasis. This is Transcriptional regulator EFH1 (EFH1) from Candida albicans (strain SC5314 / ATCC MYA-2876) (Yeast).